Reading from the N-terminus, the 723-residue chain is Catalase-peroxidase (723 aa).

A cross-link (tryptophyl-tyrosyl-methioninium (Trp-Tyr) (with M-250)) is located at residues 96-224 (WHAAGSYRVA…LAAVMMGLIY (129 aa)). Residue His97 is the Proton acceptor of the active site. Positions 224 to 250 (YVNPEGVDGQPDPLKTAQDVRVTFARM) form a cross-link, tryptophyl-tyrosyl-methioninium (Tyr-Met) (with W-96). Residue His265 coordinates heme b.

This sequence belongs to the peroxidase family. Peroxidase/catalase subfamily. In terms of assembly, homodimer or homotetramer. It depends on heme b as a cofactor. In terms of processing, formation of the three residue Trp-Tyr-Met cross-link is important for the catalase, but not the peroxidase activity of the enzyme.

The enzyme catalyses H2O2 + AH2 = A + 2 H2O. It carries out the reaction 2 H2O2 = O2 + 2 H2O. Its function is as follows. Bifunctional enzyme with both catalase and broad-spectrum peroxidase activity. The chain is Catalase-peroxidase from Leptothrix cholodnii (strain ATCC 51168 / LMG 8142 / SP-6) (Leptothrix discophora (strain SP-6)).